The following is a 246-amino-acid chain: Proteasome subunit alpha (246 aa).

It belongs to the peptidase T1A family. The 20S proteasome core is composed of 14 alpha and 14 beta subunits that assemble into four stacked heptameric rings, resulting in a barrel-shaped structure. The two inner rings, each composed of seven catalytic beta subunits, are sandwiched by two outer rings, each composed of seven alpha subunits. The catalytic chamber with the active sites is on the inside of the barrel. Has a gated structure, the ends of the cylinder being occluded by the N-termini of the alpha-subunits. Is capped by the proteasome-associated ATPase, ARC. Can also interact with the bacterial proteasome activator Bpa through the C-terminal hydrophobic-tyrosine-X motif (HbYX motif) of Bpa; Bpa forms a homooligomeric ring-like structure which stacks co-axially with the proteasomal alpha-rings. In terms of processing, pupylated at an undetermined lysine residue by the prokaryotic ubiquitin-like protein Pup with the help of the ligase PafA, which leads to its degradation by the proteasome and thereby constitutes a negative auto-regulation.

It localises to the cytoplasm. The protein operates within protein degradation; proteasomal Pup-dependent pathway. Its activity is regulated as follows. The formation of the proteasomal ATPase ARC-20S proteasome complex, likely via the docking of the C-termini of ARC into the intersubunit pockets in the alpha-rings, may trigger opening of the gate for substrate entry. Interconversion between the open-gate and close-gate conformations leads to a dynamic regulation of the 20S proteasome proteolysis activity. PPS auto-regulates its own activity via pupylation and degradation of its components. Peptidolytic activity is inhibited by N-acetyl-Leu-Leu-norleucinal (Ac-LLnL) in vitro. In terms of biological role, component of the proteasome core, a large protease complex with broad specificity involved in protein degradation. The M.smegmatis proteasome is able to cleave oligopeptides after hydrophobic residues, thus displaying chymotrypsin-like activity. In complex with the ATPase Mpa, degrades protein targets conjugated to a prokaryotic ubiquitin-like protein (Pup). Identified substrates of the M.smegmatis proteasome are the pupylated SodA and Ino1 proteins. The Pup-proteasome system (PPS) is essential for survival under starvation; PPS likely functions to recycle amino acids under nitrogen starvation, thereby enabling the cell to maintain basal metabolic activities. This Mycolicibacterium smegmatis (strain ATCC 700084 / mc(2)155) (Mycobacterium smegmatis) protein is Proteasome subunit alpha.